Here is a 138-residue protein sequence, read N- to C-terminus: uncharacterized protein (138 aa).

Residues 9-133 enclose the MsrB domain; that stretch reads EDEWKKELGP…NSASLEFHNE (125 aa). Cys49, Cys52, Cys97, and Cys100 together coordinate Zn(2+). The Nucleophile role is filled by Cys122.

The protein belongs to the MsrB Met sulfoxide reductase family. Zn(2+) serves as cofactor.

It localises to the cytoplasm. It is found in the nucleus. This is an uncharacterized protein from Schizosaccharomyces pombe (strain 972 / ATCC 24843) (Fission yeast).